The following is a 647-amino-acid chain: 1-deoxy-D-xylulose-5-phosphate synthase (647 aa).

Thiamine diphosphate-binding positions include H72 and 113-115 (GHA). D144 contacts Mg(2+). Residues 145 to 146 (GA), N174, Y287, and E370 contribute to the thiamine diphosphate site. Residue N174 participates in Mg(2+) binding.

This sequence belongs to the transketolase family. DXPS subfamily. As to quaternary structure, homodimer. Requires Mg(2+) as cofactor. It depends on thiamine diphosphate as a cofactor.

It catalyses the reaction D-glyceraldehyde 3-phosphate + pyruvate + H(+) = 1-deoxy-D-xylulose 5-phosphate + CO2. The protein operates within metabolic intermediate biosynthesis; 1-deoxy-D-xylulose 5-phosphate biosynthesis; 1-deoxy-D-xylulose 5-phosphate from D-glyceraldehyde 3-phosphate and pyruvate: step 1/1. Its function is as follows. Catalyzes the acyloin condensation reaction between C atoms 2 and 3 of pyruvate and glyceraldehyde 3-phosphate to yield 1-deoxy-D-xylulose-5-phosphate (DXP). The sequence is that of 1-deoxy-D-xylulose-5-phosphate synthase from Synechococcus sp. (strain WH7803).